The primary structure comprises 279 residues: MTSSDYDPASEGAETDFSRRMSYGDYLALDAILGAQHPLSEAHDEMLFIIQHQTTELWMRLAIHELSAARRAIARDEVQPAMKMLARMSRIFEQLNNAWDVLRTMTPSEYTRFRSQLGQSSGFQSRQYRLIEYLLGNRNHAMLKPHAHDAEVTKLLEAELATPSLYDEVLRLADRNGLTMPAAVLSRDVRETHSFNEGVLQAWRVVYEAPETHWMLYELAEKLVDFEDYFRRWRFNHVTTVERVIGFKRGTGGTGGVSYLKRMLEVELFPELWRVRTIL.

Residues 48–52 (FIIQH), tyrosine 110, and arginine 114 contribute to the substrate site. Histidine 237 is a binding site for heme. Threonine 251 is a substrate binding site.

The protein belongs to the tryptophan 2,3-dioxygenase family. In terms of assembly, homotetramer. Requires heme as cofactor.

The enzyme catalyses L-tryptophan + O2 = N-formyl-L-kynurenine. Its pathway is amino-acid degradation; L-tryptophan degradation via kynurenine pathway; L-kynurenine from L-tryptophan: step 1/2. Functionally, heme-dependent dioxygenase that catalyzes the oxidative cleavage of the L-tryptophan (L-Trp) pyrrole ring and converts L-tryptophan to N-formyl-L-kynurenine. Catalyzes the oxidative cleavage of the indole moiety. This is Tryptophan 2,3-dioxygenase from Bradyrhizobium diazoefficiens (strain JCM 10833 / BCRC 13528 / IAM 13628 / NBRC 14792 / USDA 110).